The primary structure comprises 263 residues: Cell division coordinator CpoB (263 aa).

A signal peptide spans 1–26; that stretch reads MSSNFRHQLLSLSLLVGIAAPWAAFA. A coiled-coil region spans residues 44-88; the sequence is QLERISNAHSQLLTQLQQQLSDNQSDIDSLRGQIQENQYQLNQVV. Over residues 106–123 the composition is skewed to low complexity; the sequence is AAAQSTSGDQSGAAASTT. Positions 106 to 139 are disordered; sequence AAAQSTSGDQSGAAASTTPTADAGTANAGAPVKS. TPR repeat units lie at residues 143 to 176, 180 to 213, and 217 to 250; these read NTDY…YPDS, PNAN…YPKS, and ADAM…YPGT.

The protein belongs to the CpoB family. As to quaternary structure, homotrimer. Interacts directly with the central domain of TolA and with PBP1B. Binding to TolA disrupts the homotrimer to form a YbgF/TolA heterodimer with weak affinity. Forms a quaternary complex with PBP1B-LpoB and TolA.

Its subcellular location is the periplasm. Mediates coordination of peptidoglycan synthesis and outer membrane constriction during cell division. Promotes physical and functional coordination of the PBP1B-LpoB and Tol machines, and regulates PBP1B activity in response to Tol energy state. This chain is Cell division coordinator CpoB, found in Escherichia coli (strain K12).